We begin with the raw amino-acid sequence, 130 residues long: Small ribosomal subunit protein uS8 (130 aa).

This sequence belongs to the universal ribosomal protein uS8 family. Part of the 30S ribosomal subunit. Contacts proteins S5 and S12.

One of the primary rRNA binding proteins, it binds directly to 16S rRNA central domain where it helps coordinate assembly of the platform of the 30S subunit. This Photobacterium profundum (strain SS9) protein is Small ribosomal subunit protein uS8.